Consider the following 233-residue polypeptide: Large ribosomal subunit protein uL1 (233 aa).

It belongs to the universal ribosomal protein uL1 family. Part of the 50S ribosomal subunit.

In terms of biological role, binds directly to 23S rRNA. The L1 stalk is quite mobile in the ribosome, and is involved in E site tRNA release. Its function is as follows. Protein L1 is also a translational repressor protein, it controls the translation of the L11 operon by binding to its mRNA. This chain is Large ribosomal subunit protein uL1, found in Nautilia profundicola (strain ATCC BAA-1463 / DSM 18972 / AmH).